The following is a 408-amino-acid chain: tRNA-specific 2-thiouridylase MnmA (408 aa).

Residues 27 to 34 (AMSGGVDS) and leucine 53 contribute to the ATP site. Cysteine 121 (nucleophile) is an active-site residue. An intrachain disulfide couples cysteine 121 to cysteine 222. Glycine 145 provides a ligand contact to ATP. Residues 172–174 (RDQ) form an interaction with tRNA region. Cysteine 222 functions as the Cysteine persulfide intermediate in the catalytic mechanism.

It belongs to the MnmA/TRMU family.

The protein resides in the cytoplasm. It carries out the reaction S-sulfanyl-L-cysteinyl-[protein] + uridine(34) in tRNA + AH2 + ATP = 2-thiouridine(34) in tRNA + L-cysteinyl-[protein] + A + AMP + diphosphate + H(+). Functionally, catalyzes the 2-thiolation of uridine at the wobble position (U34) of tRNA, leading to the formation of s(2)U34. The sequence is that of tRNA-specific 2-thiouridylase MnmA from Rhizobium johnstonii (strain DSM 114642 / LMG 32736 / 3841) (Rhizobium leguminosarum bv. viciae).